A 237-amino-acid polypeptide reads, in one-letter code: GrpE protein homolog, mitochondrial (237 aa).

Belongs to the GrpE family. Probable component of the PAM complex at least composed of a mitochondrial HSP70 protein, GrpE, tim-44, tim-16 and tim-14/dnj-21.

It localises to the mitochondrion matrix. Its function is as follows. Essential component of the PAM complex, a complex required for the translocation of transit peptide-containing proteins from the inner membrane into the mitochondrial matrix in an ATP-dependent manner. Seems to control the nucleotide-dependent binding of mitochondrial HSP70 to substrate proteins. In Caenorhabditis elegans, this protein is GrpE protein homolog, mitochondrial.